Reading from the N-terminus, the 478-residue chain is Probable glycine dehydrogenase (decarboxylating) subunit 2 (478 aa).

Lys-264 is modified (N6-(pyridoxal phosphate)lysine).

This sequence belongs to the GcvP family. C-terminal subunit subfamily. As to quaternary structure, the glycine cleavage system is composed of four proteins: P, T, L and H. In this organism, the P 'protein' is a heterodimer of two subunits. Pyridoxal 5'-phosphate is required as a cofactor.

It carries out the reaction N(6)-[(R)-lipoyl]-L-lysyl-[glycine-cleavage complex H protein] + glycine + H(+) = N(6)-[(R)-S(8)-aminomethyldihydrolipoyl]-L-lysyl-[glycine-cleavage complex H protein] + CO2. The glycine cleavage system catalyzes the degradation of glycine. The P protein binds the alpha-amino group of glycine through its pyridoxal phosphate cofactor; CO(2) is released and the remaining methylamine moiety is then transferred to the lipoamide cofactor of the H protein. This Endomicrobium trichonymphae protein is Probable glycine dehydrogenase (decarboxylating) subunit 2.